Consider the following 607-residue polypeptide: Glutamine--fructose-6-phosphate aminotransferase [isomerizing] (607 aa).

Cys-2 serves as the catalytic Nucleophile; for GATase activity. Residues 2–217 form the Glutamine amidotransferase type-2 domain; sequence CGIIGIIGRE…EGDWVVLTRE (216 aa). SIS domains are found at residues 283 to 422 and 455 to 597; these read PDFD…VKGQ and VATA…VDQP. The active-site For Fru-6P isomerization activity is the Lys-602.

In terms of assembly, homodimer.

Its subcellular location is the cytoplasm. The catalysed reaction is D-fructose 6-phosphate + L-glutamine = D-glucosamine 6-phosphate + L-glutamate. Functionally, catalyzes the first step in hexosamine metabolism, converting fructose-6P into glucosamine-6P using glutamine as a nitrogen source. The chain is Glutamine--fructose-6-phosphate aminotransferase [isomerizing] from Zymomonas mobilis subsp. mobilis (strain ATCC 31821 / ZM4 / CP4).